Here is a 136-residue protein sequence, read N- to C-terminus: Cell wall synthesis protein CwsA (136 aa).

The chain crosses the membrane as a helical span at residues Leu94–Val114.

Belongs to the CwsA family. As to quaternary structure, interacts with CrgA and Wag31.

Its subcellular location is the cell membrane. In terms of biological role, required for regulated cell division, cell wall synthesis and the maintenance of cell shape. The protein is Cell wall synthesis protein CwsA of Mycolicibacterium smegmatis (strain ATCC 700084 / mc(2)155) (Mycobacterium smegmatis).